The chain runs to 309 residues: Porphobilinogen deaminase (309 aa).

At Cys242 the chain carries S-(dipyrrolylmethanemethyl)cysteine.

The protein belongs to the HMBS family. As to quaternary structure, monomer. The cofactor is dipyrromethane.

The catalysed reaction is 4 porphobilinogen + H2O = hydroxymethylbilane + 4 NH4(+). It functions in the pathway porphyrin-containing compound metabolism; protoporphyrin-IX biosynthesis; coproporphyrinogen-III from 5-aminolevulinate: step 2/4. Functionally, tetrapolymerization of the monopyrrole PBG into the hydroxymethylbilane pre-uroporphyrinogen in several discrete steps. The protein is Porphobilinogen deaminase of Pseudoalteromonas atlantica (strain T6c / ATCC BAA-1087).